A 174-amino-acid chain; its full sequence is Inactive signal peptidase IA (174 aa).

The Cytoplasmic portion of the chain corresponds to 1–7 (MKKVVKY). The helical transmembrane segment at 8–28 (LISLILAIIIVLFVQTFVIVG) threads the bilayer. The Extracellular portion of the chain corresponds to 29 to 174 (HVIPNNDMSP…FSKWTVQFKS (146 aa)).

Belongs to the peptidase S26 family.

The protein resides in the cell membrane. In terms of biological role, catalytically inactive. The sequence is that of Inactive signal peptidase IA (spsA) from Staphylococcus aureus (strain COL).